Here is a 252-residue protein sequence, read N- to C-terminus: Insulin-induced gene 1 protein (252 aa).

The Cytoplasmic portion of the chain corresponds to 1 to 59; the sequence is MPRLESGAWSCSCAARARHAARPGEAAPKADAMQSPSPSAGRAEREASGGSATTWRQHL. The segment at 22–48 is disordered; that stretch reads RPGEAAPKADAMQSPSPSAGRAEREAS. A helical membrane pass occupies residues 60–82; sequence VQRSVVLFVVGAFMALVLNLLQI. Residues 83-101 are Extracellular-facing; it reads QRNVTLFPDEVIATLFSSA. The chain crosses the membrane as a helical span at residues 102–119; it reads WWVPPCCGTAAAVVGLLY. Residues 120–134 are Cytoplasmic-facing; that stretch reads PCIDSHLGEPHKFKR. A helical membrane pass occupies residues 135 to 157; sequence EWASVMRCIAVFVGINHASAKLD. Topologically, residues 158 to 160 are extracellular; it reads FAN. The chain crosses the membrane as a helical span at residues 161 to 179; it reads NVQLSLTLAALSLGLWWTF. The Cytoplasmic segment spans residues 180–184; sequence DRSRS. The helical transmembrane segment at 185–206 threads the bilayer; that stretch reads GLGLGITIAFVATLITQFLVYN. At 207–220 the chain is on the extracellular side; that stretch reads GVYQYTSPDFLYIR. The chain crosses the membrane as a helical span at residues 221 to 238; the sequence is SWLPCIFFSGGVTVGNIG. The Cytoplasmic segment spans residues 239 to 252; it reads RQLAMGIPEKPHND. The short motif at 246 to 252 is the KxHxx element; that stretch reads PEKPHND.

The protein belongs to the INSIG family. In terms of assembly, interacts with SCAP; interaction is direct and only takes place in the presence of sterols; it prevents interaction between SCAP and the coat protein complex II (COPII). Associates with the SCAP-SREBP complex; association is mediated via its interaction with SCAP and only takes place in the presence of sterols.

It localises to the endoplasmic reticulum membrane. Oxysterol-binding protein that mediates feedback control of cholesterol synthesis by controlling both endoplasmic reticulum to Golgi transport of SCAP and degradation of HMGCR. Acts as a negative regulator of cholesterol biosynthesis by mediating the retention of the SCAP-SREBP complex in the endoplasmic reticulum, thereby blocking the processing of sterol regulatory element-binding proteins (SREBPs). Binds oxysterol, including 25-hydroxycholesterol, regulating interaction with SCAP and retention of the SCAP-SREBP complex in the endoplasmic reticulum. In presence of oxysterol, interacts with SCAP, retaining the SCAP-SREBP complex in the endoplasmic reticulum, thereby preventing SCAP from escorting SREBPs to the Golgi. Sterol deprivation reduces oxysterol-binding, disrupting the interaction between INSIG1 and SCAP, thereby promoting Golgi transport of the SCAP-SREBP complex, followed by processing and nuclear translocation of SREBPs. Also regulates cholesterol synthesis by regulating degradation of HMGCR. The sequence is that of Insulin-induced gene 1 protein from Gallus gallus (Chicken).